The sequence spans 318 residues: Melanoma-associated antigen 8 (318 aa).

A disordered region spans residues 1–103 (MLLGQKSQRY…GPSTSPDPAH (103 aa)). The MAGE domain occupies 112–311 (LDEKVAELVR…ISYPSLHEEA (200 aa)).

In terms of tissue distribution, expressed in many tumors of several types, such as melanoma, head and neck squamous cell carcinoma, lung carcinoma and breast carcinoma, but not in normal tissues except for testis and placenta.

Its function is as follows. Not known, though may play a role in embryonal development and tumor transformation or aspects of tumor progression. The sequence is that of Melanoma-associated antigen 8 (MAGEA8) from Homo sapiens (Human).